The following is a 209-amino-acid chain: Large ribosomal subunit protein uL3 (209 aa).

Residues 141-163 (RAVGSMGASSDPSRTFKNKRMPG) are disordered.

Belongs to the universal ribosomal protein uL3 family. As to quaternary structure, part of the 50S ribosomal subunit. Forms a cluster with proteins L14 and L19.

In terms of biological role, one of the primary rRNA binding proteins, it binds directly near the 3'-end of the 23S rRNA, where it nucleates assembly of the 50S subunit. The chain is Large ribosomal subunit protein uL3 from Clostridium botulinum (strain Langeland / NCTC 10281 / Type F).